Here is a 290-residue protein sequence, read N- to C-terminus: 4-hydroxybenzoate octaprenyltransferase (290 aa).

The next 9 membrane-spanning stretches (helical) occupy residues 20-40 (IGILLLLWPTLWGLWLAAEGV), 43-63 (LDILLIFVLGTVLMRSAGCVV), 92-112 (EALLLAAGLSLVAFLLIQPLN), 114-131 (LTIELSFVALFLAASYPF), 135-155 (FFAMPQAYLGIAFSFGIPMAF), 160-180 (GEVPFPAWFLMGANLLWVIAY), 209-229 (VVGVVLCHMAFLAGMVAIGLL), 231-251 (NLGVIYYIGLATALGLILYQY), and 266-286 (FLHNNWVGATIFAGIVLDYLV).

Belongs to the UbiA prenyltransferase family. Mg(2+) serves as cofactor.

It localises to the cell inner membrane. It carries out the reaction all-trans-octaprenyl diphosphate + 4-hydroxybenzoate = 4-hydroxy-3-(all-trans-octaprenyl)benzoate + diphosphate. The protein operates within cofactor biosynthesis; ubiquinone biosynthesis. In terms of biological role, catalyzes the prenylation of para-hydroxybenzoate (PHB) with an all-trans polyprenyl group. Mediates the second step in the final reaction sequence of ubiquinone-8 (UQ-8) biosynthesis, which is the condensation of the polyisoprenoid side chain with PHB, generating the first membrane-bound Q intermediate 3-octaprenyl-4-hydroxybenzoate. The polypeptide is 4-hydroxybenzoate octaprenyltransferase (Nitrosospira multiformis (strain ATCC 25196 / NCIMB 11849 / C 71)).